Consider the following 476-residue polypeptide: MTAATKSLKQDYAIADLSLADWGRKEIRIAESEMPALMAIREEYAKTQPLKGARVTGSLHMTIQTAVLVETLQALGAEVRWASCNIFSTQDHAAAALVQAGTPVFAHKGESLKEYWDFTHRIFDFGPAGSDHEGPNMILDDGGDATLLMHLGKRAEKDASVLANPQSEEERELYAAIKAKLAEDATWYTRKSAKILGVTEETTTGVHRLQEMSAKGTLLFRAINVNDSVTKSKFDNLYGCRESLVDGIKRATDVMVAGKIAVVAGYGDVGKGSAQALRALSAQVWVTEIDPICALQAAMEGYRVVTMDYAADKADIFVTATGNKGVITHDHMAKMKDQAIVCNIGHFDNEIEVASLEKYKWEEIKPQVDHIIFPDNKRIILLAKGRLVNLGCGTGHPSYVMSSSFANQTIAQIELYSHSANYEVGKVYVLPKHLDEKVARLQLKKLNAQLTELSQEQADYIGVKTSGPYKPDTYRY.

Thr62, Asp141, and Glu201 together coordinate substrate. Residue 202 to 204 (TTT) participates in NAD(+) binding. Residues Lys231 and Asp235 each contribute to the substrate site. Residues Asn236, 265-270 (GYGDVG), Glu288, Asn323, 344-346 (IGH), and Asn389 contribute to the NAD(+) site.

It belongs to the adenosylhomocysteinase family. The cofactor is NAD(+).

The protein resides in the cytoplasm. The catalysed reaction is S-adenosyl-L-homocysteine + H2O = L-homocysteine + adenosine. It participates in amino-acid biosynthesis; L-homocysteine biosynthesis; L-homocysteine from S-adenosyl-L-homocysteine: step 1/1. Its function is as follows. May play a key role in the regulation of the intracellular concentration of adenosylhomocysteine. The sequence is that of Adenosylhomocysteinase from Myxococcus xanthus (strain DK1622).